A 422-amino-acid polypeptide reads, in one-letter code: E3 ubiquitin-protein ligase IE2 (422 aa).

Positions 1–10 (MSRQINAVTP) are enriched in polar residues. Disordered regions lie at residues 1–86 (MSRQ…VQII) and 165–215 (SPRS…EGEE). The segment covering 14–26 (SRRHRLSLSRRRI) has biased composition (basic residues). Low complexity predominate over residues 36 to 63 (PSSSSRSQPSSSSRSQPYSSSRSQPYSS). The segment covering 71-80 (ERSQEQRVSE) has biased composition (basic and acidic residues). Positions 179–196 (DVLSQSPDLFDSPQSPQQ) are enriched in polar residues. Residues 200–215 (ELEDEDEEEEEEEGEE) show a composition bias toward acidic residues. An RING-type; degenerate zinc finger spans residues 220 to 268 (CNICFTTLKDTKNVDSSFVTSIDCNHAVCFKCYVRIIMDNSTYKCFCSA). Residues 314-414 (IDLNDVERLE…RRNSELVAEL (101 aa)) adopt a coiled-coil conformation.

The protein belongs to the alphabaculovirus IE2 protein family. Homooligomer. In terms of processing, auto-ubiquitinated.

The protein resides in the host nucleus. The enzyme catalyses S-ubiquitinyl-[E2 ubiquitin-conjugating enzyme]-L-cysteine + [acceptor protein]-L-lysine = [E2 ubiquitin-conjugating enzyme]-L-cysteine + N(6)-ubiquitinyl-[acceptor protein]-L-lysine.. Its function is as follows. RING-finger E3 ubiquitin ligase that plays an important regulatory role during the initial stages of infection. Migrates to specific nuclear foci early in infection supposely to prepare the sites for viral replication by targeting and ubiquitinating host proteins. In Bombyx mori nuclear polyhedrosis virus (BmNPV), this protein is E3 ubiquitin-protein ligase IE2 (IE2).